The primary structure comprises 57 residues: Large ribosomal subunit protein eL20 (57 aa).

Belongs to the eukaryotic ribosomal protein eL20 family. As to quaternary structure, part of the 50S ribosomal subunit. Binds 23S rRNA.

This is Large ribosomal subunit protein eL20 from Halorhabdus utahensis (strain DSM 12940 / JCM 11049 / AX-2).